A 368-amino-acid chain; its full sequence is Protein mab-21-like (368 aa).

This sequence belongs to the mab-21 family.

In Drosophila pseudoobscura pseudoobscura (Fruit fly), this protein is Protein mab-21-like.